The sequence spans 127 residues: Small ribosomal subunit protein uS12 (127 aa).

Asp-89 bears the 3-methylthioaspartic acid mark. The interval 101–127 (ALDTSGVAGRTQRRSKYGAKRPKEAKK) is disordered. Positions 111–127 (TQRRSKYGAKRPKEAKK) are enriched in basic residues.

Belongs to the universal ribosomal protein uS12 family. As to quaternary structure, part of the 30S ribosomal subunit. Contacts proteins S8 and S17. May interact with IF1 in the 30S initiation complex.

Its function is as follows. With S4 and S5 plays an important role in translational accuracy. Functionally, interacts with and stabilizes bases of the 16S rRNA that are involved in tRNA selection in the A site and with the mRNA backbone. Located at the interface of the 30S and 50S subunits, it traverses the body of the 30S subunit contacting proteins on the other side and probably holding the rRNA structure together. The combined cluster of proteins S8, S12 and S17 appears to hold together the shoulder and platform of the 30S subunit. In Flavobacterium johnsoniae (strain ATCC 17061 / DSM 2064 / JCM 8514 / BCRC 14874 / CCUG 350202 / NBRC 14942 / NCIMB 11054 / UW101) (Cytophaga johnsonae), this protein is Small ribosomal subunit protein uS12.